We begin with the raw amino-acid sequence, 347 residues long: L-Ala-D/L-amino acid epimerase (347 aa).

156–158 (KLK) contacts substrate. 3 residues coordinate Mg(2+): aspartate 183, glutamate 211, and aspartate 237. Residues lysine 259 and 309 to 311 (DID) contribute to the substrate site.

It belongs to the mandelate racemase/muconate lactonizing enzyme family. Mg(2+) is required as a cofactor.

Functionally, dipeptide epimerase with a broad substrate specificity. Catalyzes the epimerization of L-Ala-L-Ala, L-Ala-L-Ser, L-Ala-L-Thr, L-Ala-L-Met, L-Ala-L-Phe, L-Ala-L-Tyr, L-Gly-L-Asp, L-Val-L-Asp, L-Val-L-Glu and L-Val-L-Phe (in vitro). Can also catalyze the epimerization of L-Ala-L-Glu, but with lower efficiency. In Pedosphaera parvula (strain Ellin514), this protein is L-Ala-D/L-amino acid epimerase.